A 223-amino-acid chain; its full sequence is Proteasome subunit beta (223 aa).

A propeptide spans 1–6 (MDTMKG) (removed in mature form; by autocatalysis). The Nucleophile role is filled by Thr-7.

It belongs to the peptidase T1B family. The 20S proteasome core is composed of 14 alpha and 14 beta subunits that assemble into four stacked heptameric rings, resulting in a barrel-shaped structure. The two inner rings, each composed of seven catalytic beta subunits, are sandwiched by two outer rings, each composed of seven alpha subunits. The catalytic chamber with the active sites is on the inside of the barrel. Has a gated structure, the ends of the cylinder being occluded by the N-termini of the alpha-subunits. Is capped at one or both ends by the proteasome regulatory ATPase, PAN.

It localises to the cytoplasm. It catalyses the reaction Cleavage of peptide bonds with very broad specificity.. The formation of the proteasomal ATPase PAN-20S proteasome complex, via the docking of the C-termini of PAN into the intersubunit pockets in the alpha-rings, triggers opening of the gate for substrate entry. Interconversion between the open-gate and close-gate conformations leads to a dynamic regulation of the 20S proteasome proteolysis activity. Functionally, component of the proteasome core, a large protease complex with broad specificity involved in protein degradation. The chain is Proteasome subunit beta from Methanocaldococcus vulcanius (strain ATCC 700851 / DSM 12094 / M7) (Methanococcus vulcanius).